A 168-amino-acid polypeptide reads, in one-letter code: S-ribosylhomocysteine lyase (168 aa).

His-54, His-58, and Cys-128 together coordinate Fe cation.

The protein belongs to the LuxS family. In terms of assembly, homodimer. The cofactor is Fe cation.

It carries out the reaction S-(5-deoxy-D-ribos-5-yl)-L-homocysteine = (S)-4,5-dihydroxypentane-2,3-dione + L-homocysteine. Involved in the synthesis of autoinducer 2 (AI-2) which is secreted by bacteria and is used to communicate both the cell density and the metabolic potential of the environment. The regulation of gene expression in response to changes in cell density is called quorum sensing. Catalyzes the transformation of S-ribosylhomocysteine (RHC) to homocysteine (HC) and 4,5-dihydroxy-2,3-pentadione (DPD). The protein is S-ribosylhomocysteine lyase of Histophilus somni (strain 129Pt) (Haemophilus somnus).